Consider the following 2364-residue polypeptide: Cytotoxin-L (2364 aa).

The interval methionine 1–leucine 91 is four-helical bundle. In terms of domain architecture, GT44 spans lysine 96–leucine 468. The segment at lysine 96 to leucine 468 is glucosyltransferase region. UDP-alpha-D-glucose contacts are provided by residues isoleucine 101 to isoleucine 103, asparagine 139, leucine 265 to aspartate 270, and aspartate 286 to aspartate 288. Aspartate 288, glutamate 515, and serine 518 together coordinate Mg(2+). Residue serine 518–tryptophan 520 participates in UDP-alpha-D-glucose binding. An autoprocessing region region spans residues glycine 544–threonine 799. Zn(2+)-binding residues include glutamate 545 and aspartate 546. Residues serine 567–serine 774 form the Peptidase C80 domain. 1D-myo-inositol hexakisphosphate is bound by residues tyrosine 577, lysine 600, and lysine 647. Histidine 653 lines the Zn(2+) pocket. Histidine 653 (for protease activity) is an active-site residue. Cysteine 698 acts as the Nucleophile; for protease activity in catalysis. A Zn(2+)-binding site is contributed by histidine 757. 3 residues coordinate 1D-myo-inositol hexakisphosphate: lysine 764, lysine 775, and lysine 792. Positions leucine 800–proline 1500 are translocation region. 5 interaction with host SEMA6A and SEMA6B regions span residues cysteine 1433–glutamate 1438, aspartate 1466–tyrosine 1471, phenylalanine 1484–arginine 1495, asparagine 1504–lysine 1511, and tyrosine 1596–proline 1601. 19 Cell wall-binding repeats span residues valine 1833–asparagine 1852, isoleucine 1854–glycine 1873, serine 1876–leucine 1895, phenylalanine 1926–alanine 1945, alanine 1946–glutamate 1965, leucine 1967–methionine 1986, glutamine 1987–methionine 2006, glutamine 2007–arginine 2026, tyrosine 2057–alanine 2076, valine 2077–glutamate 2097, cysteine 2099–arginine 2118, glutamine 2119–isoleucine 2138, glutamate 2139–valine 2158, glutamate 2209–proline 2224, lysine 2227–methionine 2249, lysine 2250–methionine 2269, glutamine 2270–methionine 2289, tyrosine 2320–alanine 2339, and alanine 2340–glutamate 2359. The receptor-binding (CROPS) region stretch occupies residues glycine 1835–glutamate 2364.

The protein belongs to the clostridial glucosylating toxin (LCGT) family. Homomultimer; forms an inactive homomultimer at pH 8, which dissociates at pH 4, leading to cytotoxicity. Interacts with host SEMA6A; interaction promotes toxin entry into host cell. Interacts with host SEMA6B; interaction promotes toxin entry into host cell. It depends on Zn(2+) as a cofactor. Requires Mn(2+) as cofactor. Mg(2+) is required as a cofactor. Post-translationally, undergoes autocatalytic cleavage to release the N-terminal part (Glucosyltransferase TcsL), which constitutes the active part of the toxin, in the host cytosol. 1D-myo-inositol hexakisphosphate-binding (InsP6) activates the peptidase C80 domain and promotes autoprocessing.

The protein resides in the secreted. It localises to the host endosome membrane. It is found in the host cytoplasm. The protein localises to the host cytosol. Its subcellular location is the host cell membrane. It catalyses the reaction L-threonyl-[protein] + UDP-alpha-D-glucose = 3-O-(alpha-D-glucosyl)-L-threonyl-[protein] + UDP + H(+). Its activity is regulated as follows. Protease activity is activated upon binding to 1D-myo-inositol hexakisphosphate (InsP6), which induces conformational reorganization. Its function is as follows. Precursor of a cytotoxin that targets the vascular endothelium, inducing an anti-inflammatory effect and resulting in lethal toxic shock syndrome. TcsL constitutes the main toxin that mediates the pathology of P.sordellii infection, an anaerobic Gram-positive bacterium found in soil and in the gastrointestinal and vaginal tracts of animals and humans; although the majority of carriers are asymptomatic, pathogenic P.sordellii infections arise rapidly and are highly lethal. This form constitutes the precursor of the toxin: it enters into host cells and mediates autoprocessing to release the active toxin (Glucosyltransferase TcsL) into the host cytosol. Targets vascular endothelium by binding to the semaphorin proteins SEMA6A and SEMA6B, and enters host cells via clathrin-mediated endocytosis. Once entered into host cells, acidification in the endosome promotes the membrane insertion of the translocation region and formation of a pore, leading to translocation of the GT44 and peptidase C80 domains across the endosomal membrane. This activates the peptidase C80 domain and autocatalytic processing, releasing the N-terminal part (Glucosyltransferase TcsL), which constitutes the active part of the toxin, in the cytosol. In terms of biological role, active form of the toxin, which is released into the host cytosol following autoprocessing and inactivates small GTPases. Acts by mediating monoglucosylation of small GTPases of the Ras (H-Ras/HRAS, K-Ras/KRAS and N-Ras/NRAS) family in host cells at the conserved threonine residue located in the switch I region ('Thr-37/35'), using UDP-alpha-D-glucose as the sugar donor. Does not catalyze monoglucosylation of Ral/RALA. Also able to catalyze monoglucosylation of some members of the Rho family (Rac1 and Rap2A), but with less efficiency than with Ras proteins. Monoglucosylation of host small GTPases completely prevents the recognition of the downstream effector, blocking the GTPases in their inactive form and leading to apoptosis. Induces an anti-inflammatory effect, mainly by inactivating Ras proteins which results in blockage of the cell cycle and killing of immune cells. The absence or moderate local inflammatory response allows C.sordellii spreading in deep tissues, production of toxin which is released in the general circulation and causes a toxic shock syndrome. The sequence is that of Cytotoxin-L from Paraclostridium sordellii (Clostridium sordellii).